The primary structure comprises 388 residues: Alanine racemase 1 (388 aa).

Lys40 (proton acceptor; specific for D-alanine) is an active-site residue. Lys40 is subject to N6-(pyridoxal phosphate)lysine. Arg138 contributes to the substrate binding site. The active-site Proton acceptor; specific for L-alanine is the Tyr268. Met316 serves as a coordination point for substrate.

The protein belongs to the alanine racemase family. Pyridoxal 5'-phosphate serves as cofactor.

The enzyme catalyses L-alanine = D-alanine. The protein operates within amino-acid biosynthesis; D-alanine biosynthesis; D-alanine from L-alanine: step 1/1. Catalyzes the interconversion of L-alanine and D-alanine. May also act on other amino acids. This is Alanine racemase 1 (alr1) from Caldanaerobacter subterraneus subsp. tengcongensis (strain DSM 15242 / JCM 11007 / NBRC 100824 / MB4) (Thermoanaerobacter tengcongensis).